The following is a 174-amino-acid chain: MAVEAEQCLFLGLDSVVDLHVSHVKNRLARFVGHSSVLCPSCHRHGYVSSCKGNSSLYWNGDPILLAVGDYCNMNFERVNLCIAILLRGCGLHVVNCSNNLSTSCLDLRSLILSSDLLHDLTYWNWLNRCREDVNLPISVVPGVAGLEVVEEVPLAVIATFRVRNRELPPLLLG.

This is an uncharacterized protein from Archaeoglobus fulgidus (strain ATCC 49558 / DSM 4304 / JCM 9628 / NBRC 100126 / VC-16).